A 334-amino-acid chain; its full sequence is N-acetyl-S-alkylcysteine monooxygenase (334 aa).

To bacterial alkanal monooxygenase alpha and beta chains.

The enzyme catalyses N-acetyl-S-benzyl-L-cysteine + FMNH2 + O2 = (R)-N-acetyl-S-benzyl-L-cysteine sulfoxide + FMN + H2O + H(+). It catalyses the reaction N-acetyl-S-methyl-L-cysteine + FMNH2 + O2 = (R)-N-acetyl-S-methyl-L-cysteine sulfoxide + FMN + H2O + H(+). The protein operates within amino-acid metabolism. Involved in a cysteine salvage pathway from S-alkylcysteine. Catalyzes the oxidation of N-acetyl-S-benzyl-L-cysteine and N-acetyl-S-methyl-L-cysteine to (R)-N-acetyl-S-benzyl-L-cysteine sulfoxide and (R)-N-acetyl-S-methyl-L-cysteine sulfoxide, respectively. This pathway is likely important in the catabolism of alkylated cysteine generated by proteolysis of alkylated glutathione formed in the detoxification of a wide range of electrophiles. The polypeptide is N-acetyl-S-alkylcysteine monooxygenase (Bacillus subtilis (strain 168)).